The chain runs to 121 residues: Histone H2B, sperm (121 aa).

The disordered stretch occupies residues Met1–Lys30. Pro2 carries the n,N-dimethylproline modification. Ser108 carries an O-linked (GlcNAc) serine glycan. Lys116 participates in a covalent cross-link: Glycyl lysine isopeptide (Lys-Gly) (interchain with G-Cter in ubiquitin).

This sequence belongs to the histone H2B family. The nucleosome is a histone octamer containing two molecules each of H2A, H2B, H3 and H4 assembled in one H3-H4 heterotetramer and two H2A-H2B heterodimers. The octamer wraps approximately 147 bp of DNA. In terms of processing, monoubiquitination of Lys-116 gives a specific tag for epigenetic transcriptional activation and is also prerequisite for histone H3 'Lys-4' and 'Lys-79' methylation. Post-translationally, glcNAcylation at Ser-108 promotes monoubiquitination of Lys-116. It fluctuates in response to extracellular glucose, and associates with transcribed genes.

The protein localises to the nucleus. The protein resides in the chromosome. In terms of biological role, core component of nucleosome. Nucleosomes wrap and compact DNA into chromatin, limiting DNA accessibility to the cellular machineries which require DNA as a template. Histones thereby play a central role in transcription regulation, DNA repair, DNA replication and chromosomal stability. DNA accessibility is regulated via a complex set of post-translational modifications of histones, also called histone code, and nucleosome remodeling. The protein is Histone H2B, sperm of Marthasterias glacialis (Spiny starfish).